A 105-amino-acid chain; its full sequence is Small ribosomal subunit protein uS10 (105 aa).

Belongs to the universal ribosomal protein uS10 family. Part of the 30S ribosomal subunit.

Functionally, involved in the binding of tRNA to the ribosomes. This Picosynechococcus sp. (strain ATCC 27264 / PCC 7002 / PR-6) (Agmenellum quadruplicatum) protein is Small ribosomal subunit protein uS10.